The primary structure comprises 87 residues: Small ribosomal subunit protein bS18 (87 aa).

The protein belongs to the bacterial ribosomal protein bS18 family. As to quaternary structure, part of the 30S ribosomal subunit. Forms a tight heterodimer with protein bS6.

Its function is as follows. Binds as a heterodimer with protein bS6 to the central domain of the 16S rRNA, where it helps stabilize the platform of the 30S subunit. The polypeptide is Small ribosomal subunit protein bS18 (Campylobacter hominis (strain ATCC BAA-381 / DSM 21671 / CCUG 45161 / LMG 19568 / NCTC 13146 / CH001A)).